Here is a 529-residue protein sequence, read N- to C-terminus: Peptide chain release factor 3 (529 aa).

The region spanning 11–280 is the tr-type G domain; that stretch reads NSRRTFAIIS…AFINWAPEPK (270 aa). Residues 20–27, 88–92, and 142–145 contribute to the GTP site; these read SHPDAGKT, DTPGH, and NKMD.

The protein belongs to the TRAFAC class translation factor GTPase superfamily. Classic translation factor GTPase family. PrfC subfamily.

The protein resides in the cytoplasm. Its function is as follows. Increases the formation of ribosomal termination complexes and stimulates activities of RF-1 and RF-2. It binds guanine nucleotides and has strong preference for UGA stop codons. It may interact directly with the ribosome. The stimulation of RF-1 and RF-2 is significantly reduced by GTP and GDP, but not by GMP. The chain is Peptide chain release factor 3 from Acinetobacter baylyi (strain ATCC 33305 / BD413 / ADP1).